The chain runs to 1745 residues: ADAMTS-like protein 1 (1745 aa).

Residues 1 to 28 form the signal peptide; sequence MECCRRAAPGTPLLVLAFLLLSSRTARS. In terms of domain architecture, TSP type-1 1 spans 33–82; sequence EGLWDAWGPWSECSRTCGGGASYSLRRCLSSKSCEGRNIRYRTCSNVDCP. 3 cysteine pairs are disulfide-bonded: C45–C76, C49–C81, and C60–C66. N-linked (GlcNAc...) asparagine glycosylation is present at N251. 2 O-linked (Fuc...) serine glycosylation sites follow: S310 and S391. TSP type-1 domains follow at residues 376–424, 436–493, 522–584, 607–667, 703–762, and 763–825; these read PLPR…MYTP, DCPK…TPCY, EEPS…GPCN, ELYD…DPCP, CPPA…KKDD, and CPSE…ATCA. O-linked (Fuc...) threonine glycosylation is present at T451. Cystine bridges form between C534/C578, C538/C583, and C549/C567. Cystine bridges form between C775-C819, C779-C824, C790-C807, and C874-C922. The region spanning 836–938 is the Ig-like C2-type 1 domain; sequence PHIAAARNIY…EQFVIKLIGG (103 aa). Disordered stretches follow at residues 966 to 991 and 1114 to 1137; these read EALQ…GLTA and VSGF…RPHR. Positions 1115–1126 are enriched in low complexity; the sequence is SGFSSSLRSSSG. 3 consecutive Ig-like C2-type domains span residues 1139–1241, 1261–1352, and 1378–1468; these read PAIL…IAVT, PTVT…TQLL, and PSVL…ASLV. Cystine bridges form between C1177–C1225, C1283–C1336, and C1401–C1452. TSP type-1 domains lie at 1528 to 1591 and 1649 to 1709; these read CPSR…QLCV and CSVH…TPCE. The region spanning 1709-1745 is the PLAC domain; the sequence is ENTECRDTTRYCEKVRQLKLCQLGQFRSRCCGTCGKA.

As to quaternary structure, monomer. In terms of processing, glycosylated. O-fucosylated by POFUT2 on a serine or a threonine residue found within the consensus sequence C1-X(2)-(S/T)-C2-G of the TSP type-1 repeat domains where C1 and C2 are the first and second cysteine residue of the repeat, respectively. Fucosylated repeats can then be further glycosylated by the addition of a beta-1,3-glucose residue by the glucosyltransferase, B3GALTL. Fucosylation mediates the efficient secretion of ADAMTS family members. Can also be C-glycosylated with one or two mannose molecules on tryptophan residues within the consensus sequence W-X-X-W of the TPRs, and N-glycosylated. These other glycosylations can also facilitate secretion. Post-translationally, disulfide bonds are present.

The protein resides in the secreted. It localises to the extracellular space. Its subcellular location is the extracellular matrix. The protein is ADAMTS-like protein 1 (Adamtsl1) of Mus musculus (Mouse).